We begin with the raw amino-acid sequence, 641 residues long: Bifunctional protein glk (641 aa).

The segment at 1-340 (MSTGAQTKAA…QLSNRTGGAS (340 aa)) is glucokinase. 23–28 (ADVGGT) is a binding site for ATP. One can recognise an HTH rpiR-type domain in the interval 341–417 (SAVFERIRQM…LKLATGLTGT (77 aa)). The tract at residues 341 to 641 (SAVFERIRQM…SHGAAPAAKD (301 aa)) is putative HTH-type transcriptional regulator. Positions 377 to 396 (IVNIARKADVSQPTVIRFCR) form a DNA-binding region, H-T-H motif. Residues 461–600 (AIDILNNARR…AVGVAIRRAA (140 aa)) enclose the SIS domain. Residues 576 to 596 (SMISRILHLVMIDILAVGVAI) traverse the membrane as a helical segment.

In the N-terminal section; belongs to the bacterial glucokinase family.

It is found in the membrane. It catalyses the reaction D-glucose + ATP = D-glucose 6-phosphate + ADP + H(+). The chain is Bifunctional protein glk (glk) from Burkholderia mallei (strain ATCC 23344).